The following is a 42-amino-acid chain: Large ribosomal subunit protein bL36 (42 aa).

The protein belongs to the bacterial ribosomal protein bL36 family.

In Ehrlichia canis (strain Jake), this protein is Large ribosomal subunit protein bL36.